The primary structure comprises 197 residues: Recombination protein RecR (197 aa).

A C4-type zinc finger spans residues Cys-54–Cys-69. A Toprim domain is found at Thr-77–Pro-172.

It belongs to the RecR family.

Functionally, may play a role in DNA repair. It seems to be involved in an RecBC-independent recombinational process of DNA repair. It may act with RecF and RecO. The sequence is that of Recombination protein RecR from Legionella pneumophila (strain Paris).